A 333-amino-acid chain; its full sequence is tRNA-modifying protein YgfZ (333 aa).

Positions 33 and 195 each coordinate folate.

It belongs to the tRNA-modifying YgfZ family.

Its subcellular location is the cytoplasm. Folate-binding protein involved in regulating the level of ATP-DnaA and in the modification of some tRNAs. It is probably a key factor in regulatory networks that act via tRNA modification, such as initiation of chromosomal replication. This chain is tRNA-modifying protein YgfZ, found in Pectobacterium atrosepticum (strain SCRI 1043 / ATCC BAA-672) (Erwinia carotovora subsp. atroseptica).